The primary structure comprises 206 residues: Small ribosomal subunit protein uS4B (206 aa).

Positions 96 to 156 (GRLDNVVYRM…EKAKKQSRIG (61 aa)) constitute an S4 RNA-binding domain.

It belongs to the universal ribosomal protein uS4 family. In terms of assembly, part of the 30S ribosomal subunit. Contacts protein S5. The interaction surface between S4 and S5 is involved in control of translational fidelity.

In terms of biological role, one of the primary rRNA binding proteins, it binds directly to 16S rRNA where it nucleates assembly of the body of the 30S subunit. Its function is as follows. With S5 and S12 plays an important role in translational accuracy. This Psychromonas ingrahamii (strain DSM 17664 / CCUG 51855 / 37) protein is Small ribosomal subunit protein uS4B.